Consider the following 261-residue polypeptide: Spermatogenesis-associated protein 46 (261 aa).

Residues 140–159 (SSSSSPENTCPREATKKSRH) form a disordered region.

Testis-specific.

The protein resides in the nucleus membrane. In terms of biological role, plays a role in spermiogenesis and fertilization. The protein is Spermatogenesis-associated protein 46 of Homo sapiens (Human).